The chain runs to 123 residues: Small ribosomal subunit protein uS13 (123 aa).

Residues 95 to 123 (GLPVRGQKTKTNARTRKGPKRTVGRKKKK) are disordered. Over residues 101 to 123 (QKTKTNARTRKGPKRTVGRKKKK) the composition is skewed to basic residues.

The protein belongs to the universal ribosomal protein uS13 family. As to quaternary structure, part of the 30S ribosomal subunit. Forms a loose heterodimer with protein S19. Forms two bridges to the 50S subunit in the 70S ribosome.

Located at the top of the head of the 30S subunit, it contacts several helices of the 16S rRNA. In the 70S ribosome it contacts the 23S rRNA (bridge B1a) and protein L5 of the 50S subunit (bridge B1b), connecting the 2 subunits; these bridges are implicated in subunit movement. Contacts the tRNAs in the A and P-sites. In Alkaliphilus metalliredigens (strain QYMF), this protein is Small ribosomal subunit protein uS13.